A 148-amino-acid polypeptide reads, in one-letter code: Probable glucosamine 6-phosphate N-acetyltransferase (148 aa).

One can recognise an N-acetyltransferase domain in the interval 3–148 (ISINELNFDD…KQMALYLNGK (146 aa)). Residues threonine 25, 72 to 75 (KFIH), and 84 to 86 (EDV) contribute to the substrate site. Residues 86–88 (VVV) and 94–99 (LHGIGK) contribute to the acetyl-CoA site. Substrate contacts are provided by residues 115–116 (YK) and aspartate 120. Acetyl-CoA is bound at residue 129 to 131 (YCK). Residue glutamate 138 coordinates substrate.

This sequence belongs to the acetyltransferase family. GNA1 subfamily.

It catalyses the reaction D-glucosamine 6-phosphate + acetyl-CoA = N-acetyl-D-glucosamine 6-phosphate + CoA + H(+). It participates in nucleotide-sugar biosynthesis; UDP-N-acetyl-alpha-D-glucosamine biosynthesis; N-acetyl-alpha-D-glucosamine 1-phosphate from alpha-D-glucosamine 6-phosphate (route I): step 1/2. This Acanthamoeba polyphaga (Amoeba) protein is Probable glucosamine 6-phosphate N-acetyltransferase.